The sequence spans 457 residues: ATP synthase subunit beta (457 aa).

An ATP-binding site is contributed by 147–154 (GGAGVGKT).

This sequence belongs to the ATPase alpha/beta chains family. In terms of assembly, F-type ATPases have 2 components, CF(1) - the catalytic core - and CF(0) - the membrane proton channel. CF(1) has five subunits: alpha(3), beta(3), gamma(1), delta(1), epsilon(1). CF(0) has three main subunits: a(1), b(2) and c(9-12). The alpha and beta chains form an alternating ring which encloses part of the gamma chain. CF(1) is attached to CF(0) by a central stalk formed by the gamma and epsilon chains, while a peripheral stalk is formed by the delta and b chains.

The protein resides in the cell inner membrane. It carries out the reaction ATP + H2O + 4 H(+)(in) = ADP + phosphate + 5 H(+)(out). In terms of biological role, produces ATP from ADP in the presence of a proton gradient across the membrane. The catalytic sites are hosted primarily by the beta subunits. This Glaesserella parasuis serovar 5 (strain SH0165) (Haemophilus parasuis) protein is ATP synthase subunit beta.